Here is a 354-residue protein sequence, read N- to C-terminus: Uroporphyrinogen decarboxylase (354 aa).

Substrate contacts are provided by residues 27–31 (RQAGR), Asp77, Tyr154, Ser209, and His327.

It belongs to the uroporphyrinogen decarboxylase family. Homodimer.

Its subcellular location is the cytoplasm. The enzyme catalyses uroporphyrinogen III + 4 H(+) = coproporphyrinogen III + 4 CO2. Its pathway is porphyrin-containing compound metabolism; protoporphyrin-IX biosynthesis; coproporphyrinogen-III from 5-aminolevulinate: step 4/4. Its function is as follows. Catalyzes the decarboxylation of four acetate groups of uroporphyrinogen-III to yield coproporphyrinogen-III. The chain is Uroporphyrinogen decarboxylase from Shewanella frigidimarina (strain NCIMB 400).